The primary structure comprises 392 residues: MTESAAPSPRCVAAILLAGGRGLRAGFGRPKQLEWLCGKPVLRWSLDVLAGYPGLSGGVLVANHDVMAATYPLPEGWMAADPGVERQQSVANALSALTDWPDDAVVLVHDAARPGVDSAVVDRLLAALDGADAAIPVLPVPDTLVEAADGAAGAVVARDRLARVQTPQAFRLGTLRRAHAEASGAAATDDAQLVRSLGVSVATVEGDARLHKLTYAADMAILAGLLGTKDMMRTAVGMGYDVHRLVEGKPLWIGGIEIAHSHGLEGHSDADVGLHALTDAILGALGDGDIGDHFPPSDPQWRGAASHHFLSFAGERVAANGGRIGHLDLTIIAEAPRIGPHRVAIRDRIAEILAIPAGRVSVKATTTERLGFTGRREGIAAQAVATIQLPET.

2-C-methyl-D-erythritol 4-phosphate cytidylyltransferase stretches follow at residues 1–234 (MTES…MMRT) and 1–235 (MTES…MRTA). The tract at residues 235–392 (AVGMGYDVHR…AVATIQLPET (158 aa)) is 2-C-methyl-D-erythritol 2,4-cyclodiphosphate synthase. A divalent metal cation is bound by residues Asp241 and His243. 4-CDP-2-C-methyl-D-erythritol 2-phosphate is bound by residues 241 to 243 (DVH) and 267 to 268 (HS). His275 serves as a coordination point for a divalent metal cation. 4-CDP-2-C-methyl-D-erythritol 2-phosphate is bound by residues 289 to 291 (DIG), 365 to 368 (TTTE), Phe372, and Arg375.

This sequence in the N-terminal section; belongs to the IspD/TarI cytidylyltransferase family. IspD subfamily. In the C-terminal section; belongs to the IspF family. A divalent metal cation is required as a cofactor.

It catalyses the reaction 2-C-methyl-D-erythritol 4-phosphate + CTP + H(+) = 4-CDP-2-C-methyl-D-erythritol + diphosphate. It carries out the reaction 4-CDP-2-C-methyl-D-erythritol 2-phosphate = 2-C-methyl-D-erythritol 2,4-cyclic diphosphate + CMP. It participates in isoprenoid biosynthesis; isopentenyl diphosphate biosynthesis via DXP pathway; isopentenyl diphosphate from 1-deoxy-D-xylulose 5-phosphate: step 2/6. Its pathway is isoprenoid biosynthesis; isopentenyl diphosphate biosynthesis via DXP pathway; isopentenyl diphosphate from 1-deoxy-D-xylulose 5-phosphate: step 4/6. Its function is as follows. Bifunctional enzyme that catalyzes the formation of 4-diphosphocytidyl-2-C-methyl-D-erythritol from CTP and 2-C-methyl-D-erythritol 4-phosphate (MEP) (IspD), and catalyzes the conversion of 4-diphosphocytidyl-2-C-methyl-D-erythritol 2-phosphate (CDP-ME2P) to 2-C-methyl-D-erythritol 2,4-cyclodiphosphate (ME-CPP) with a corresponding release of cytidine 5-monophosphate (CMP) (IspF). In Sphingopyxis alaskensis (strain DSM 13593 / LMG 18877 / RB2256) (Sphingomonas alaskensis), this protein is Bifunctional enzyme IspD/IspF.